Reading from the N-terminus, the 347-residue chain is GMP reductase (347 aa).

108–131 is a binding site for NADP(+); sequence ADFDKMKQILALSPSLKFICIDVA. K(+) is bound by residues glycine 181 and glycine 183. The active-site Thioimidate intermediate is cysteine 186. Residue 216–239 coordinates NADP(+); it reads IVSDGGCSVPGDVAKAFGGGADFV.

Belongs to the IMPDH/GMPR family. GuaC type 1 subfamily. In terms of assembly, homotetramer.

It catalyses the reaction IMP + NH4(+) + NADP(+) = GMP + NADPH + 2 H(+). Its function is as follows. Catalyzes the irreversible NADPH-dependent deamination of GMP to IMP. It functions in the conversion of nucleobase, nucleoside and nucleotide derivatives of G to A nucleotides, and in maintaining the intracellular balance of A and G nucleotides. This chain is GMP reductase, found in Yersinia pestis bv. Antiqua (strain Antiqua).